A 68-amino-acid polypeptide reads, in one-letter code: Beta-toxin Cl13 (68 aa).

Positions 1–66 constitute an LCN-type CS-alpha/beta domain; the sequence is KEGYLVDYHT…VWPLPNKRCK (66 aa). Disulfide bonds link cysteine 12–cysteine 65, cysteine 16–cysteine 41, cysteine 25–cysteine 46, and cysteine 29–cysteine 48. Lysine 66 is subject to Lysine amide.

It belongs to the long (4 C-C) scorpion toxin superfamily. Sodium channel inhibitor family. Beta subfamily. Expressed by the venom gland.

The protein resides in the secreted. Beta toxins bind voltage-independently at site-4 of sodium channels (Nav) and shift the voltage of activation toward more negative potentials thereby affecting sodium channel activation and promoting spontaneous and repetitive firing. Inhibits sodium channels Nav1.4/SCN4A, Nav1.5/SCN5A and Nav1.6/SCN8A. Also has a weak inhibitory effect on Nav1.2/SCN2A. Is lethal to mice. The protein is Beta-toxin Cl13 of Centruroides limpidus (Mexican scorpion).